A 234-amino-acid chain; its full sequence is RNA chaperone ProQ (234 aa).

The segment covering 104 to 130 has biased composition (basic and acidic residues); sequence LEEAKARVQAQRDARKREAAENGEKRE. The tract at residues 104–186 is disordered; sequence LEEAKARVQA…QRSTPVTSLE (83 aa). Residues 131-142 show a composition bias toward basic residues; it reads PRRPRPAGKKPT. Basic and acidic residues-rich tracts occupy residues 143–156 and 163–176; these read ARRD…EVRK and TSER…ETTE. Residues 177–186 show a composition bias toward polar residues; that stretch reads QRSTPVTSLE.

This sequence belongs to the ProQ family.

It localises to the cytoplasm. Its function is as follows. RNA chaperone with significant RNA binding, RNA strand exchange and RNA duplexing activities. May regulate ProP activity through an RNA-based, post-transcriptional mechanism. This is RNA chaperone ProQ from Edwardsiella ictaluri (strain 93-146).